The primary structure comprises 218 residues: Nucleoid occlusion factor SlmA (218 aa).

Residues 30 to 90 enclose the HTH tetR-type domain; that stretch reads ERRQQVLTVL…ALIEHIESTL (61 aa). A DNA-binding region (H-T-H motif) is located at residues 53–72; that stretch reads TTARLAKEVGVSEAALYRYF.

It belongs to the nucleoid occlusion factor SlmA family. Homodimer. Interacts with FtsZ.

It localises to the cytoplasm. The protein resides in the nucleoid. Required for nucleoid occlusion (NO) phenomenon, which prevents Z-ring formation and cell division over the nucleoid. Acts as a DNA-associated cell division inhibitor that binds simultaneously chromosomal DNA and FtsZ, and disrupts the assembly of FtsZ polymers. SlmA-DNA-binding sequences (SBS) are dispersed on non-Ter regions of the chromosome, preventing FtsZ polymerization at these regions. In Haemophilus influenzae (strain PittGG), this protein is Nucleoid occlusion factor SlmA.